The following is a 78-amino-acid chain: Major outer membrane lipoprotein Lpp (78 aa).

An N-terminal signal peptide occupies residues 1–20; the sequence is MNRTKIVLGAVVLASTLLAG. A lipid anchor (N-palmitoyl cysteine) is attached at Cys-21. Cys-21 is lipidated: S-diacylglycerol cysteine. 2 repeats span residues 24-34 and 38-48; these read TAKVDQLTSDI and NAKVDQLSNDV. Residues 27 to 75 are a coiled coil; that stretch reads VDQLTSDIQTLNAKVDQLSNDVNAVHTDVQAAKDDAARANQRLDNQVRS. N6-murein peptidoglycan lysine is present on Lys-78.

Belongs to the Lpp family. Homotrimer.

Its subcellular location is the cell outer membrane. It is found in the secreted. It localises to the cell wall. In terms of biological role, a highly abundant outer membrane lipoprotein that controls the distance between the inner and outer membranes. The only protein known to be covalently linked to the peptidoglycan network (PGN). Also non-covalently binds the PGN. The link between the cell outer membrane and PGN contributes to maintenance of the structural and functional integrity of the cell envelope, and maintains the correct distance between the PGN and the outer membrane. In Photorhabdus laumondii subsp. laumondii (strain DSM 15139 / CIP 105565 / TT01) (Photorhabdus luminescens subsp. laumondii), this protein is Major outer membrane lipoprotein Lpp.